Consider the following 161-residue polypeptide: Allophycocyanin beta chain (161 aa).

The residue at position 71 (Asn-71) is an N4-methylasparagine. (2R,3E)-phycocyanobilin is bound at residue Cys-81.

This sequence belongs to the phycobiliprotein family. Heterodimer of an alpha and a beta chain. Contains one covalently linked phycocyanobilin chromophore.

It localises to the cellular thylakoid membrane. Light-harvesting photosynthetic bile pigment-protein from the phycobiliprotein complex. Allophycocyanin has a maximum absorption at approximately 650 nanometers. In Thermosynechococcus vestitus (strain NIES-2133 / IAM M-273 / BP-1), this protein is Allophycocyanin beta chain (apcB).